The sequence spans 230 residues: 7-cyano-7-deazaguanine synthase (230 aa).

ATP is bound at residue 9–19 (ISGGLDSTTCL). Residues C192, C202, C205, and C208 each contribute to the Zn(2+) site.

Belongs to the QueC family. The cofactor is Zn(2+).

It carries out the reaction 7-carboxy-7-deazaguanine + NH4(+) + ATP = 7-cyano-7-deazaguanine + ADP + phosphate + H2O + H(+). The protein operates within purine metabolism; 7-cyano-7-deazaguanine biosynthesis. In terms of biological role, catalyzes the ATP-dependent conversion of 7-carboxy-7-deazaguanine (CDG) to 7-cyano-7-deazaguanine (preQ(0)). This chain is 7-cyano-7-deazaguanine synthase, found in Myxococcus xanthus (strain DK1622).